Here is a 373-residue protein sequence, read N- to C-terminus: Maltose/maltodextrin import ATP-binding protein MalK (373 aa).

Positions 4-234 (VTLKNVCKAY…PQNRFVAGFI (231 aa)) constitute an ABC transporter domain. 36–43 (GPSGCGKS) serves as a coordination point for ATP.

Belongs to the ABC transporter superfamily. Maltooligosaccharide importer (TC 3.A.1.1.1) family. As to quaternary structure, the complex is composed of two ATP-binding proteins (MalK), two transmembrane proteins (MalG and MalK) and a solute-binding protein (MalE).

It localises to the cell inner membrane. The enzyme catalyses D-maltose(out) + ATP + H2O = D-maltose(in) + ADP + phosphate + H(+). Functionally, part of the ABC transporter complex MalEFGK involved in maltose/maltodextrin import. Responsible for energy coupling to the transport system. This chain is Maltose/maltodextrin import ATP-binding protein MalK, found in Vibrio cholerae serotype O1 (strain ATCC 39315 / El Tor Inaba N16961).